The sequence spans 375 residues: Succinyl-diaminopimelate desuccinylase (375 aa).

Residue His66 participates in Zn(2+) binding. Residue Asp68 is part of the active site. Zn(2+) is bound at residue Asp99. The active-site Proton acceptor is Glu133. Zn(2+) is bound by residues Glu134, Glu162, and His348.

It belongs to the peptidase M20A family. DapE subfamily. In terms of assembly, homodimer. Zn(2+) serves as cofactor. Co(2+) is required as a cofactor.

It carries out the reaction N-succinyl-(2S,6S)-2,6-diaminopimelate + H2O = (2S,6S)-2,6-diaminopimelate + succinate. It functions in the pathway amino-acid biosynthesis; L-lysine biosynthesis via DAP pathway; LL-2,6-diaminopimelate from (S)-tetrahydrodipicolinate (succinylase route): step 3/3. Its function is as follows. Catalyzes the hydrolysis of N-succinyl-L,L-diaminopimelic acid (SDAP), forming succinate and LL-2,6-diaminopimelate (DAP), an intermediate involved in the bacterial biosynthesis of lysine and meso-diaminopimelic acid, an essential component of bacterial cell walls. In Aeromonas hydrophila subsp. hydrophila (strain ATCC 7966 / DSM 30187 / BCRC 13018 / CCUG 14551 / JCM 1027 / KCTC 2358 / NCIMB 9240 / NCTC 8049), this protein is Succinyl-diaminopimelate desuccinylase.